The primary structure comprises 810 residues: E3 ubiquitin-protein ligase RNF10 (810 aa).

The segment covering 1–31 (MPQSSPSAAATASDMDKNSGSSSSSASSGSS) has biased composition (low complexity). A disordered region spans residues 1–119 (MPQSSPSAAA…SFNGGRRDEV (119 aa)). Residue S5 is modified to Phosphoserine. Positions 76–92 (NFINQSRRSNSQKSKTF) are enriched in polar residues. The interval 101–185 (GGSSKLFSSS…FNKELFLQAN (85 aa)) is interaction with MEOX2. Low complexity predominate over residues 104–113 (SKLFSSSFNG). Residues S110 and S128 each carry the phosphoserine modification. Residues 225–267 (CPICLYPPTAAKITRCGHIFCWACILHYLSLSEKTWSKCPICY) form an RING-type zinc finger. Disordered stretches follow at residues 598–623 (KRKRQRQKKAREERRRERRIEMEENK), 652–674 (DSALGSTSTEGRGALSLSPLSRS), 722–759 (ADVWPKTAPKKDENTLGPPAPVDSDGESDNSDRVPVPS), and 775–810 (LDTPVTSDPLSEEKGGKKRKKQKQKLLFSTSVVHTK). The segment covering 607-623 (AREERRRERRIEMEENK) has biased composition (basic and acidic residues). A compositionally biased stretch (polar residues) spans 652–661 (DSALGSTSTE). Residues 662–674 (GRGALSLSPLSRS) show a composition bias toward low complexity. Residues 722 to 735 (ADVWPKTAPKKDEN) show a composition bias toward basic and acidic residues. Positions 801–810 (LFSTSVVHTK) are enriched in polar residues.

This sequence belongs to the RNF10 family. As to quaternary structure, interacts with MEOX2.

It is found in the cytoplasm. It localises to the nucleus. The enzyme catalyses S-ubiquitinyl-[E2 ubiquitin-conjugating enzyme]-L-cysteine + [acceptor protein]-L-lysine = [E2 ubiquitin-conjugating enzyme]-L-cysteine + N(6)-ubiquitinyl-[acceptor protein]-L-lysine.. It participates in protein modification; protein ubiquitination. Its function is as follows. E3 ubiquitin-protein ligase that catalyzes monoubiquitination of 40S ribosomal proteins RPS2/us5 and RPS3/us3 in response to ribosome stalling. Part of a ribosome quality control that takes place when ribosomes have stalled during translation initiation (iRQC): RNF10 acts by mediating monoubiquitination of RPS2/us5 and RPS3/us3, promoting their degradation by the proteasome. Also promotes ubiquitination of 40S ribosomal proteins in response to ribosome stalling during translation elongation. The action of RNF10 in iRQC is counteracted by USP10. May also act as a transcriptional factor involved in the regulation of MAG (Myelin-associated glycoprotein) expression. Acts as a regulator of Schwann cell differentiation and myelination. The chain is E3 ubiquitin-protein ligase RNF10 (RNF10) from Bos taurus (Bovine).